A 920-amino-acid chain; its full sequence is Isoleucine--tRNA ligase (920 aa).

The 'HIGH' region motif lies at 58-68 (PYANGHLHLGH). Glutamate 569 provides a ligand contact to L-isoleucyl-5'-AMP. Positions 610–614 (KMSKS) match the 'KMSKS' region motif. ATP is bound at residue lysine 613. Zn(2+)-binding residues include cysteine 895, cysteine 898, cysteine 910, and cysteine 913.

Belongs to the class-I aminoacyl-tRNA synthetase family. IleS type 1 subfamily. As to quaternary structure, monomer. Requires Zn(2+) as cofactor.

It localises to the cytoplasm. The catalysed reaction is tRNA(Ile) + L-isoleucine + ATP = L-isoleucyl-tRNA(Ile) + AMP + diphosphate. Functionally, catalyzes the attachment of isoleucine to tRNA(Ile). As IleRS can inadvertently accommodate and process structurally similar amino acids such as valine, to avoid such errors it has two additional distinct tRNA(Ile)-dependent editing activities. One activity is designated as 'pretransfer' editing and involves the hydrolysis of activated Val-AMP. The other activity is designated 'posttransfer' editing and involves deacylation of mischarged Val-tRNA(Ile). The chain is Isoleucine--tRNA ligase from Helicobacter pylori (strain J99 / ATCC 700824) (Campylobacter pylori J99).